Here is a 145-residue protein sequence, read N- to C-terminus: D-aminoacyl-tRNA deacylase (145 aa).

The Gly-cisPro motif, important for rejection of L-amino acids signature appears at 137–138; sequence GP.

The protein belongs to the DTD family. Homodimer.

Its subcellular location is the cytoplasm. The catalysed reaction is glycyl-tRNA(Ala) + H2O = tRNA(Ala) + glycine + H(+). It catalyses the reaction a D-aminoacyl-tRNA + H2O = a tRNA + a D-alpha-amino acid + H(+). Its function is as follows. An aminoacyl-tRNA editing enzyme that deacylates mischarged D-aminoacyl-tRNAs. Also deacylates mischarged glycyl-tRNA(Ala), protecting cells against glycine mischarging by AlaRS. Acts via tRNA-based rather than protein-based catalysis; rejects L-amino acids rather than detecting D-amino acids in the active site. By recycling D-aminoacyl-tRNA to D-amino acids and free tRNA molecules, this enzyme counteracts the toxicity associated with the formation of D-aminoacyl-tRNA entities in vivo and helps enforce protein L-homochirality. In Salmonella typhimurium (strain LT2 / SGSC1412 / ATCC 700720), this protein is D-aminoacyl-tRNA deacylase.